A 446-amino-acid polypeptide reads, in one-letter code: ATP-dependent protease ATPase subunit HslU (446 aa).

ATP is bound by residues Val-18, 60–65 (GVGKTE), Asp-259, Glu-324, and Arg-396.

The protein belongs to the ClpX chaperone family. HslU subfamily. In terms of assembly, a double ring-shaped homohexamer of HslV is capped on each side by a ring-shaped HslU homohexamer. The assembly of the HslU/HslV complex is dependent on binding of ATP.

It is found in the cytoplasm. In terms of biological role, ATPase subunit of a proteasome-like degradation complex; this subunit has chaperone activity. The binding of ATP and its subsequent hydrolysis by HslU are essential for unfolding of protein substrates subsequently hydrolyzed by HslV. HslU recognizes the N-terminal part of its protein substrates and unfolds these before they are guided to HslV for hydrolysis. This Acidovorax sp. (strain JS42) protein is ATP-dependent protease ATPase subunit HslU.